The following is a 299-amino-acid chain: Homeobox protein ceh-24 (299 aa).

Over residues 1-35 the composition is skewed to basic and acidic residues; that stretch reads MSEKETPSPVLDVKKEKNEETGIDEEKSSEDDCSK. Disordered stretches follow at residues 1–45 and 208–263; these read MSEK…NPSK and QEKE…SGVF. Positions 150–209 form a DNA-binding region, homeobox; it reads RRKRRVLFSQAQVYELERRFKQAKYLTAPEREQLANSIRLTPTQVKIWFQNHRYKCKRQE. Residues 242-252 are compositionally biased toward acidic residues; the sequence is DDKDDEEEEES.

This sequence belongs to the NK-2 homeobox family. As to expression, expressed in the 8 vulval muscles, 8-10 ventral neurons in the head and in the most posterior pharyngeal muscle cell, m8. Expressed in SIA, SIB and SMB sublateral motor neurons, and in muscles of the pharynx and vulva.

The protein resides in the nucleus. Probable transcriptional regulator that is required in neural development for the normal formation of sublateral cholinergic motor neuron processes. Plays a role in regulating the expression of acetylcholine transporter protein unc-17 in the sublateral processes. In particular, it is required in sublateral motor neurons for a left-right turning behavior that occurs during the lethargus phase of the normal sleep process called 'flipping'. During 'flipping' animals rotate 180 degrees about their longitudinal axis. The protein is Homeobox protein ceh-24 of Caenorhabditis elegans.